An 869-amino-acid polypeptide reads, in one-letter code: DNA mismatch repair protein MutS (869 aa).

Residue 602 to 609 (GPNMSGKS) coordinates ATP.

Belongs to the DNA mismatch repair MutS family.

In terms of biological role, this protein is involved in the repair of mismatches in DNA. It is possible that it carries out the mismatch recognition step. This protein has a weak ATPase activity. The sequence is that of DNA mismatch repair protein MutS from Bacillus licheniformis (strain ATCC 14580 / DSM 13 / JCM 2505 / CCUG 7422 / NBRC 12200 / NCIMB 9375 / NCTC 10341 / NRRL NRS-1264 / Gibson 46).